Consider the following 314-residue polypeptide: Oxaloacetate tautomerase FAHD2A, mitochondrial (314 aa).

The N-terminal 84 residues, 1-84 (MLVSGRRRLL…ATLSVARRAL (84 aa)), are a transit peptide targeting the mitochondrion. Glu-159, Glu-161, and Asp-190 together coordinate Mg(2+).

Belongs to the FAH family. Mg(2+) serves as cofactor. Mn(2+) is required as a cofactor.

The protein resides in the mitochondrion. It catalyses the reaction oxaloacetate = enol-oxaloacetate. Its function is as follows. Tautomerase that converts enol-oxaloacetate, a strong inhibitor of succinate dehydrogenase, to the physiological keto form of oxaloacetate. It is thereby required to maximize aerobic respiration efficiency by preventing succinate dehydrogenase inhibition. In Homo sapiens (Human), this protein is Oxaloacetate tautomerase FAHD2A, mitochondrial.